Reading from the N-terminus, the 454-residue chain is Cobyrinate a,c-diamide synthase (454 aa).

The GATase cobBQ-type domain occupies 244-435; that stretch reads KIAVAYDSAF…VHIHFLSNIA (192 aa). Residue cysteine 327 is the Nucleophile of the active site.

This sequence belongs to the CobB/CbiA family. The cofactor is Mg(2+).

It carries out the reaction cob(II)yrinate + 2 L-glutamine + 2 ATP + 2 H2O = cob(II)yrinate a,c diamide + 2 L-glutamate + 2 ADP + 2 phosphate + 2 H(+). The protein operates within cofactor biosynthesis; adenosylcobalamin biosynthesis; cob(II)yrinate a,c-diamide from sirohydrochlorin (anaerobic route): step 10/10. Catalyzes the ATP-dependent amidation of the two carboxylate groups at positions a and c of cobyrinate, using either L-glutamine or ammonia as the nitrogen source. The chain is Cobyrinate a,c-diamide synthase from Thermoplasma volcanium (strain ATCC 51530 / DSM 4299 / JCM 9571 / NBRC 15438 / GSS1).